Consider the following 443-residue polypeptide: MIKERKTELVEGFRHSVPYINTHRGKTFVIMLGGEAIEHDNFSSIVSDIGLLHSLGIRLVVVYGARPQIDANLAAHHHEPIYHKNTRVTDAKALELVKQAAGLLQLDITARLSMSLNNTPLQGAHINVVSGNFTIAQPLGVDDGVDYCHSGRIRRIDEDAINRQLDNGAIVLMGPVAVSVTGESFNLTSEEIATQLAVKLKAEKMIGFCSSQGVTNSEGGIISELFPNEAQARVEELEAQGDYNSGTVRFLRGAVKACRSGVRRCHLISYQEDGSLLQELFSRDGIGTQIVMESAEQIRRATINDIGGILELIRPLEQQGILVRRSREQLEMEIDKFTIIQRDNMTIACAALYPFVEEKIGEMACVAVHPDYRSSSRGEVLLERVAAQARQMGLRKLFVLTTRSIHWFQERGFTPVDIELLPESKKKMYNYQRRSKVLMADLG.

The region spanning 296 to 443 (EQIRRATIND…RSKVLMADLG (148 aa)) is the N-acetyltransferase domain.

It belongs to the acetyltransferase family. ArgA subfamily. In terms of assembly, homohexamer.

It localises to the cytoplasm. The catalysed reaction is L-glutamate + acetyl-CoA = N-acetyl-L-glutamate + CoA + H(+). The protein operates within amino-acid biosynthesis; L-arginine biosynthesis; N(2)-acetyl-L-ornithine from L-glutamate: step 1/4. This chain is Amino-acid acetyltransferase (argA), found in Salmonella typhimurium (strain LT2 / SGSC1412 / ATCC 700720).